Reading from the N-terminus, the 214-residue chain is External core antigen (214 aa).

Positions 1 to 19 (MQLFHLCLIISCTCPTVQA) are cleaved as a signal peptide. Residues 25–27 (GWL) are HBEAG. Residues 165–214 (NAPILSTLPETTVVRRRDRGRSPRRRTPSPRRRRSQSPRRRRSQSRESQC) form a disordered region. A compositionally biased stretch (basic residues) spans 178–207 (VRRRDRGRSPRRRTPSPRRRRSQSPRRRRS). One copy of the 1; half-length repeat lies at 186–192 (SPRRRTP). The tract at residues 186–208 (SPRRRTPSPRRRRSQSPRRRRSQ) is 3 X 8 AA repeats of S-P-R-R-R-R-S-Q. Positions 186-214 (SPRRRTPSPRRRRSQSPRRRRSQSRESQC) are excised as a propeptide. Repeat copies occupy residues 193–200 (SPRRRRSQ) and 201–208 (SPRRRRSQ).

The protein belongs to the orthohepadnavirus precore antigen family. In terms of assembly, homodimerizes. In terms of processing, phosphorylated. Post-translationally, cleaved by host furin.

The protein resides in the secreted. It localises to the host nucleus. May regulate immune response to the intracellular capsid in acting as a T-cell tolerogen, by having an immunoregulatory effect which prevents destruction of infected cells by cytotoxic T-cells. This immune regulation may predispose to chronicity during perinatal infections and prevent severe liver injury during adult infections. In Hepatitis B virus genotype A2 subtype adw2 (isolate Germany/991/1990) (HBV-A), this protein is External core antigen.